Consider the following 43-residue polypeptide: Probable intron-encoded DNA endonuclease 2 (43 aa).

Belongs to the LAGLIDADG endonuclease family.

It localises to the mitochondrion. Mitochondrial DNA endonuclease involved in intron homing. The sequence is that of Probable intron-encoded DNA endonuclease 2 (hegI2) from Mycosarcoma maydis (Corn smut fungus).